The sequence spans 55 residues: ATP synthase F(0) complex subunit 8 (55 aa).

The chain crosses the membrane as a helical span at residues 4–24 (LLPTPWFTIFIYAWMVLLAVI).

It belongs to the ATPase protein 8 family. In terms of assembly, component of the ATP synthase complex composed at least of ATP5F1A/subunit alpha, ATP5F1B/subunit beta, ATP5MC1/subunit c (homooctomer), MT-ATP6/subunit a, MT-ATP8/subunit 8, ATP5ME/subunit e, ATP5MF/subunit f, ATP5MG/subunit g, ATP5MK/subunit k, ATP5MJ/subunit j, ATP5F1C/subunit gamma, ATP5F1D/subunit delta, ATP5F1E/subunit epsilon, ATP5PF/subunit F6, ATP5PB/subunit b, ATP5PD/subunit d, ATP5PO/subunit OSCP. ATP synthase complex consists of a soluble F(1) head domain (subunits alpha(3) and beta(3)) - the catalytic core - and a membrane F(0) domain - the membrane proton channel (subunits c, a, 8, e, f, g, k and j). These two domains are linked by a central stalk (subunits gamma, delta, and epsilon) rotating inside the F1 region and a stationary peripheral stalk (subunits F6, b, d, and OSCP).

It localises to the mitochondrion membrane. In terms of biological role, subunit 8, of the mitochondrial membrane ATP synthase complex (F(1)F(0) ATP synthase or Complex V) that produces ATP from ADP in the presence of a proton gradient across the membrane which is generated by electron transport complexes of the respiratory chain. ATP synthase complex consist of a soluble F(1) head domain - the catalytic core - and a membrane F(1) domain - the membrane proton channel. These two domains are linked by a central stalk rotating inside the F(1) region and a stationary peripheral stalk. During catalysis, ATP synthesis in the catalytic domain of F(1) is coupled via a rotary mechanism of the central stalk subunits to proton translocation. In vivo, can only synthesize ATP although its ATP hydrolase activity can be activated artificially in vitro. Part of the complex F(0) domain. This Dicentrarchus labrax (European seabass) protein is ATP synthase F(0) complex subunit 8.